A 321-amino-acid chain; its full sequence is Gap junction delta-2 protein (321 aa).

The Cytoplasmic portion of the chain corresponds to M1–S19. The chain crosses the membrane as a helical span at residues T20–G42. Residues E43 to H75 lie on the Extracellular side of the membrane. The chain crosses the membrane as a helical span at residues I76 to V98. Residues H99–R197 lie on the Cytoplasmic side of the membrane. Residues P120–E141 form a disordered region. A compositionally biased stretch (gly residues) spans G125–G137. The chain crosses the membrane as a helical span at residues F198 to L220. Residues Y221 to V252 are Extracellular-facing. The helical transmembrane segment at F253–L275 threads the bilayer. The Cytoplasmic segment spans residues G276–V321.

The protein belongs to the connexin family. Delta-type subfamily. As to quaternary structure, a connexon is composed of a hexamer of connexins. As to expression, highly expressed in neurons.

The protein localises to the cell membrane. The protein resides in the cell junction. Its subcellular location is the gap junction. Functionally, one gap junction consists of a cluster of closely packed pairs of transmembrane channels, the connexons, through which materials of low MW diffuse from one cell to a neighboring cell. This is Gap junction delta-2 protein (Gjd2) from Rattus norvegicus (Rat).